Here is a 228-residue protein sequence, read N- to C-terminus: Claudin-10 (228 aa).

A helical transmembrane segment spans residues 1–21; it reads MASTASEIIAFMVSISGWVLV. Over 22–80 the chain is Extracellular; it reads SSTLPTDYWKVSTIDGTVITTATYWANLWKACVTDSTGVSNCKDFPSMLALDGYIQACR. Residues 81-101 traverse the membrane as a helical segment; it reads GLMIAAVSLGFFGSIFALFGM. At 102–115 the chain is on the cytoplasmic side; the sequence is KCTKVGGSDKAKAK. Residues 116–136 traverse the membrane as a helical segment; sequence IACLAGIVFILSGLCSMTGCS. Topologically, residues 137–160 are extracellular; that stretch reads LYANKITTEFFDPLFVEQKYELGA. Residues 161 to 181 traverse the membrane as a helical segment; the sequence is ALFIGWAGASLCIIGGVIFCF. The Cytoplasmic segment spans residues 182 to 228; sequence SISDNNKTPRYTYNGATSVMSSRTKYHGGEDFKTTNPSKQFDKNAYV.

This sequence belongs to the claudin family. Can form homodimers both in trans (interaction between CLDN10 molecules in opposing membranes) and in cis (interaction between CLDN10 molecules within one membrane). As to quaternary structure, interacts with CLDN19. As to expression, expressed in the kidney, eccrine sweat glands and in all layers of the epidermis. In the kidney, it is detected in the thick ascending limb of Henle's loop (TAL). In the sweat glands, it is expressed in cells from secretory portions, corresponding to the clear cells.

It localises to the cell junction. The protein resides in the tight junction. The protein localises to the cell membrane. It catalyses the reaction Na(+)(in) = Na(+)(out). The catalysed reaction is Li(+)(in) = Li(+)(out). It carries out the reaction K(+)(in) = K(+)(out). The enzyme catalyses Rb(+)(in) = Rb(+)(out). It catalyses the reaction Cs(+)(in) = Cs(+)(out). The catalysed reaction is NH4(+)(in) = NH4(+)(out). It carries out the reaction methylamine(out) = methylamine(in). The enzyme catalyses Mg(2+)(in) = Mg(2+)(out). It catalyses the reaction Ca(2+)(in) = Ca(2+)(out). The catalysed reaction is Sr(2+)(in) = Sr(2+)(out). It carries out the reaction chloride(in) = chloride(out). The enzyme catalyses nitrate(in) = nitrate(out). Functionally, forms paracellular channels: polymerizes in tight junction strands with cation- and anion-selective channels through the strands, conveying epithelial permeability in a process known as paracellular tight junction permeability. Forms cation-selective paracellular channels. In sweat glands and in the thick ascending limb (TAL) of Henle's loop in kidney, it controls paracellular sodium permeability which is essential for proper sweat production and renal function. In terms of biological role, forms anion-selective paracellular channels. In renal proximal tubules, it conveys selective chloride over hydrogencarbonate anion permeability which is required for renal chloride reabsorption and salt homeostasis. The sequence is that of Claudin-10 from Homo sapiens (Human).